We begin with the raw amino-acid sequence, 255 residues long: tRNA pseudouridine synthase A (255 aa).

The active-site Nucleophile is Asp52. Position 111 (Tyr111) interacts with substrate.

This sequence belongs to the tRNA pseudouridine synthase TruA family. As to quaternary structure, homodimer.

It catalyses the reaction uridine(38/39/40) in tRNA = pseudouridine(38/39/40) in tRNA. Formation of pseudouridine at positions 38, 39 and 40 in the anticodon stem and loop of transfer RNAs. The polypeptide is tRNA pseudouridine synthase A (Cereibacter sphaeroides (strain ATCC 17023 / DSM 158 / JCM 6121 / CCUG 31486 / LMG 2827 / NBRC 12203 / NCIMB 8253 / ATH 2.4.1.) (Rhodobacter sphaeroides)).